We begin with the raw amino-acid sequence, 380 residues long: Ceramide synthase 2 (380 aa).

Over 1-40 (MLQTLYDYFWWERLWLPVNLTWADLEDKDGRVYAKASDLY) the chain is Lumenal. N-linked (GlcNAc...) asparagine glycosylation is present at N19. A helical transmembrane segment spans residues 41–61 (ITLPLALLFLVIRYFFELYVA). The segment at 67 to 128 (LLNVKEKTRL…RRRRNQDRPS (62 aa)) is homeobox-like. The TLC domain occupies 131 to 332 (KKFREASWRF…ILRMAHKFIT (202 aa)). Transmembrane regions (helical) follow at residues 140–160 (FTYY…KPWF), 175–195 (IIPS…SLLF), 209–229 (QIIH…ANYV), and 264–284 (LFIV…PFWI). A Last loop motif motif is present at residues 291–300 (YPLELYPAFF). Residues 304-324 (FFNFMMAVLQMLHIFWAYFIL) form a helical membrane-spanning segment. At 325–380 (RMAHKFITGKLIEDERSDREETESSEGEETAAGAGAKSRLLANGHPILNNNHPKND) the chain is on the cytoplasmic side. Residues 340 to 380 (RSDREETESSEGEETAAGAGAKSRLLANGHPILNNNHPKND) are disordered. Phosphoserine is present on S341. A compositionally biased stretch (acidic residues) spans 344–353 (EETESSEGEE). Phosphothreonine is present on T346. 2 positions are modified to phosphoserine: S348 and S349.

In terms of assembly, interacts with ATP6V0C, ASGR1, ASGR2 and SLC22A1/OCT1. Interacts with ELOV1, HSD17B12 and TECR. Interacts with NDUFS2. Interacts with PAQR4; the interaction regulates the stability and activity of CERS2 and is inhibited in presence of ceramides. Acetylated. Deacetylation by SIRT3 increases enzyme activity and promotes mitochondrial ceramide accumulation. Post-translationally, phosphorylated at the C-terminus by CK2, leading to increase the ceramide synthase activity. Broadly expressed, with highest levels in liver and kidney. In brain is detected in neurons, oligodentrocytes, ependymal cells and epithelial cells of the choroid plexus. In kidney is detected in collecting ducts and to a lesser degree in proximal tubules.

Its subcellular location is the endoplasmic reticulum membrane. The enzyme catalyses a very long-chain fatty acyl-CoA + a sphingoid base = an N-(very-long-chain fatty acyl)-sphingoid base + CoA + H(+). It carries out the reaction docosanoyl-CoA + sphinganine = N-docosanoylsphinganine + CoA + H(+). It catalyses the reaction tetracosanoyl-CoA + sphinganine = N-tetracosanoylsphinganine + CoA + H(+). The catalysed reaction is hexacosanoyl-CoA + sphinganine = N-hexacosanoylsphinganine + CoA + H(+). The enzyme catalyses (15Z)-tetracosenoyl-CoA + sphinganine = N-(15Z-tetracosenoyl)-sphinganine + CoA + H(+). It carries out the reaction 2-hydroxytetracosanoyl-CoA + sphinganine = N-(2-hydroxytetracosanoyl)-sphinganine + CoA + H(+). It catalyses the reaction 2-hydroxydocosanoyl-CoA + sphinganine = N-(2-hydroxydocosanoyl)-sphinganine + CoA + H(+). The catalysed reaction is 2-hydroxytetracosenoyl-CoA + sphinganine = N-(2-hydroxytetracosenoyl)-sphinganine + CoA + H(+). The enzyme catalyses tetracosenoyl-CoA + sphinganine = an N-tetracosenoylsphinganine + CoA + H(+). It carries out the reaction hexacosenoyl-CoA + sphinganine = N-hexacosenoylsphinganine + CoA + H(+). It catalyses the reaction tetracosanoyl-CoA + sphing-4-enine = N-tetracosanoyl-sphing-4-enine + CoA + H(+). The catalysed reaction is tetracosenoyl-CoA + sphing-4-enine = N-(tetracosenoyl)-sphing-4-enine + CoA + H(+). The enzyme catalyses heptadecasphing-4-enine + tetracosanoyl-CoA = N-tetracosanoyl-heptadecasphing-4-enine + CoA + H(+). It carries out the reaction a fatty acyl-CoA + sphing-4-enine = an N-acylsphing-4-enine + CoA + H(+). It catalyses the reaction sphing-4-enine + hexadecanoyl-CoA = N-hexadecanoylsphing-4-enine + CoA + H(+). The catalysed reaction is sphing-4-enine + octadecanoyl-CoA = N-octadecanoylsphing-4-enine + CoA + H(+). The enzyme catalyses eicosanoyl-CoA + sphing-4-enine = N-eicosanoyl-sphing-4-enine + CoA + H(+). It carries out the reaction sphinganine + hexadecanoyl-CoA = N-hexadecanoylsphinganine + CoA + H(+). It catalyses the reaction sphinganine + octadecanoyl-CoA = N-(octadecanoyl)-sphinganine + CoA + H(+). The catalysed reaction is sphinganine + (9Z)-octadecenoyl-CoA = N-(9Z-octadecenoyl)-sphinganine + CoA + H(+). The enzyme catalyses eicosanoyl-CoA + sphinganine = N-eicosanoylsphinganine + CoA + H(+). It functions in the pathway lipid metabolism; sphingolipid metabolism. Its activity is regulated as follows. Ceramide synthase activity is inhibited by sphingosine-1-phosphate. Ceramide synthase that catalyzes the transfer of the acyl chain from acyl-CoA to a sphingoid base, with high selectivity toward very-long-chain fatty acyl-CoA (chain length C22-C27). N-acylates sphinganine and sphingosine bases to form dihydroceramides and ceramides in de novo synthesis and salvage pathways, respectively. Plays a non-redundant role in the synthesis of ceramides with very-long-chain fatty acids in kidney, liver and brain. Regulates the abundance of myelin-specific sphingolipids galactosylceramide and sulfatide that affects myelin sheath architecture and motor neuron functions. This is Ceramide synthase 2 from Mus musculus (Mouse).